A 215-amino-acid polypeptide reads, in one-letter code: Chaperone protein TorD (215 aa).

It belongs to the TorD/DmsD family. TorD subfamily.

It localises to the cytoplasm. Functionally, involved in the biogenesis of TorA. Acts on TorA before the insertion of the molybdenum cofactor and, as a result, probably favors a conformation of the apoenzyme that is competent for acquiring the cofactor. The sequence is that of Chaperone protein TorD from Aliivibrio fischeri (strain ATCC 700601 / ES114) (Vibrio fischeri).